We begin with the raw amino-acid sequence, 468 residues long: ATP synthase subunit beta (468 aa).

155 to 162 serves as a coordination point for ATP; the sequence is GGAGVGKT.

Belongs to the ATPase alpha/beta chains family. As to quaternary structure, F-type ATPases have 2 components, CF(1) - the catalytic core - and CF(0) - the membrane proton channel. CF(1) has five subunits: alpha(3), beta(3), gamma(1), delta(1), epsilon(1). CF(0) has three main subunits: a(1), b(2) and c(9-12). The alpha and beta chains form an alternating ring which encloses part of the gamma chain. CF(1) is attached to CF(0) by a central stalk formed by the gamma and epsilon chains, while a peripheral stalk is formed by the delta and b chains.

The protein localises to the cell membrane. The catalysed reaction is ATP + H2O + 4 H(+)(in) = ADP + phosphate + 5 H(+)(out). Produces ATP from ADP in the presence of a proton gradient across the membrane. The catalytic sites are hosted primarily by the beta subunits. This chain is ATP synthase subunit beta, found in Streptococcus thermophilus (strain ATCC BAA-250 / LMG 18311).